Here is a 374-residue protein sequence, read N- to C-terminus: O-methyltransferase 16 (374 aa).

Residues Ser-195, Gly-219, Asp-242, Asp-262, and Lys-276 each contribute to the S-adenosyl-L-homocysteine site. Asp-242 contacts S-adenosyl-L-methionine. His-280 functions as the Proton acceptor in the catalytic mechanism.

This sequence belongs to the class I-like SAM-binding methyltransferase superfamily. Cation-independent O-methyltransferase family. As to quaternary structure, homodimer. Expressed mainly in vasculature and cortex tissues at low levels.

The enzyme catalyses dopamine + S-adenosyl-L-methionine = 4-methoxytyramine + S-adenosyl-L-homocysteine + H(+). It functions in the pathway aromatic compound metabolism. Its pathway is alkaloid biosynthesis. Functionally, O-methyltransferase participating in the biosynthesis of natural products derived from phenylethylamine, including mescaline, a natural hallucinogen potentially used in psychotherapeutic treatments. Catalyzes the O-methylation of dopamine to produce 4-methoxytyramine. The sequence is that of O-methyltransferase 16 from Lophophora williamsii (Peyote).